Here is a 147-residue protein sequence, read N- to C-terminus: Hemoglobin subunit beta (147 aa).

Val2 is subject to N-acetylvaline. The 145-residue stretch at 3-147 folds into the Globin domain; the sequence is HLSAEEKGLV…VATALAHKYH (145 aa). A Phosphothreonine modification is found at Thr13. The residue at position 45 (Ser45) is a Phosphoserine. Lys60 is subject to N6-acetyllysine. Residue His64 coordinates heme b. Lys83 carries the post-translational modification N6-acetyllysine. His93 contributes to the heme b binding site. Cys94 bears the S-nitrosocysteine mark. Position 145 is an N6-acetyllysine (Lys145).

It belongs to the globin family. As to quaternary structure, heterotetramer of two alpha chains and two beta chains. As to expression, red blood cells.

Its function is as follows. Involved in oxygen transport from the lung to the various peripheral tissues. The protein is Hemoglobin subunit beta (HBB) of Scapanus orarius (Coast mole).